A 762-amino-acid polypeptide reads, in one-letter code: Cellulose synthase-like protein H2 (762 aa).

The span at 1 to 15 (MAVVAAAAATGSTTR) shows a compositional bias: low complexity. The segment at 1–39 (MAVVAAAAATGSTTRSGGGGGEGTRSGRKKPPPPPLQER) is disordered. The next 2 membrane-spanning stretches (helical) occupy residues 47–67 (AWAW…LLAL) and 81–101 (GVWR…ALNV). Active-site residues include aspartate 180 and aspartate 470. A run of 6 helical transmembrane segments spans residues 541–561 (LAYL…CYGL), 582–602 (FSVP…EYMA), 619–639 (IISV…SLGL), 673–693 (LPVF…VTVG), 708–728 (APGI…FPFV), and 739–759 (GIPW…VTFC).

The protein belongs to the glycosyltransferase 2 family. Plant cellulose synthase-like H subfamily.

The protein localises to the golgi apparatus membrane. Its function is as follows. Thought to be a Golgi-localized beta-glycan synthase that polymerize the backbones of noncellulosic polysaccharides (hemicelluloses) of plant cell wall. The chain is Cellulose synthase-like protein H2 (CSLH2) from Oryza sativa subsp. indica (Rice).